The sequence spans 301 residues: Probable tRNA pseudouridine synthase B (301 aa).

The active-site Nucleophile is aspartate 54. One can recognise a PUA domain in the interval 227 to 301 (LPRLTIADSA…VVVALERVLV (75 aa)).

It belongs to the pseudouridine synthase TruB family. Type 2 subfamily.

The catalysed reaction is uridine(55) in tRNA = pseudouridine(55) in tRNA. Its function is as follows. Could be responsible for synthesis of pseudouridine from uracil-55 in the psi GC loop of transfer RNAs. The protein is Probable tRNA pseudouridine synthase B of Halobacterium salinarum (strain ATCC 29341 / DSM 671 / R1).